A 1447-amino-acid chain; its full sequence is Sister chromatid cohesion protein PDS5 homolog B (1447 aa).

The HEAT repeat unit spans residues 383–419; that stretch reads LLVNDHLLNFVRERTLDKRWRVRKEAMMGLAQIYKKY. A disordered region spans residues 1117–1447; the sequence is KSFFTPGKPK…RRRSAKRERR (331 aa). K1136 carries the post-translational modification N6-acetyllysine. Residues 1137–1155 show a composition bias toward polar residues; it reads PLSSAGKQSQTKSSRMETV. S1140, S1162, S1166, S1176, S1182, and S1191 each carry phosphoserine. Low complexity predominate over residues 1156 to 1167; sequence SNASSSSNPSSP. Basic and acidic residues predominate over residues 1172–1184; the sequence is GRLDSSEMDHSEN. Composition is skewed to basic and acidic residues over residues 1196–1214 and 1225–1243; these read KKSD…LEKP and QEEK…EQKP. Positions 1245–1254 are enriched in basic residues; sequence GSQRSRKRGH. Residues 1249–1261 constitute a DNA-binding region (a.T hook 1); that stretch reads SRKRGHTASESDE. T1255 is subject to Phosphothreonine. Phosphoserine is present on residues S1257 and S1259. Residues 1265-1274 show a composition bias toward basic and acidic residues; the sequence is PEEKRLKEDI. S1283 carries the post-translational modification Phosphoserine. The a.T hook 2 DNA-binding region spans 1287 to 1299; sequence KGKRGRPPKPLGG. The span at 1310–1319 shows a compositional bias: basic residues; sequence TSKKGSKKKS. S1319 and S1334 each carry phosphoserine. The segment covering 1342 to 1353 has biased composition (basic residues); that stretch reads KSKQHRVSRRAQ. The segment covering 1355 to 1372 has biased composition (polar residues); sequence RAESPESSAIESTQSTPQ. S1358 and S1366 each carry phosphoserine. T1367 is subject to Phosphothreonine. S1369 is modified (phosphoserine). Phosphothreonine occurs at positions 1370 and 1381. A DNA-binding region (a.T hook 3) is located at residues 1372–1384; the sequence is QKGRGRPSKTPSP. Positions 1379–1388 are enriched in low complexity; the sequence is SKTPSPSQPK. A phosphoserine mark is found at S1383 and S1417. Positions 1422-1432 are enriched in acidic residues; the sequence is IPQEETEEEEV. Over residues 1437–1447 the composition is skewed to basic residues; the sequence is VRRRSAKRERR.

This sequence belongs to the PDS5 family. In terms of assembly, interacts with the cohesin complex. Interacts with RAD21; the interaction is direct. Interacts with WAPL (via FGF motifs) or CDCA5 (via the FGF motif); the interaction is direct, cohesin-dependent and competitive. As to expression, widely expressed.

The protein localises to the nucleus. Regulator of sister chromatid cohesion in mitosis which may stabilize cohesin complex association with chromatin. May couple sister chromatid cohesion during mitosis to DNA replication. Cohesion ensures that chromosome partitioning is accurate in both meiotic and mitotic cells and plays an important role in DNA repair. Plays a role in androgen-induced proliferative arrest in prostate cells. The sequence is that of Sister chromatid cohesion protein PDS5 homolog B (PDS5B) from Homo sapiens (Human).